Reading from the N-terminus, the 548-residue chain is Myrosinase (548 aa).

Residues 1-20 (MKLLHGLALVFLLAAASCKA) form the signal peptide. Cystine bridges form between Cys26–Cys458, Cys34–Cys454, and Cys226–Cys236. Gln59 serves as a coordination point for substrate. 2 residues coordinate Zn(2+): His76 and Asp90. A glycan (N-linked (GlcNAc...) asparagine) is linked at Asn110. Residues His161 and Asn206 each contribute to the substrate site. Gln207 is an L-ascorbate binding site. An N-linked (GlcNAc...) asparagine glycan is attached at Asn240. Residue Arg281 coordinates L-ascorbate. Asn331 is a glycosylation site (N-linked (GlcNAc...) asparagine). A substrate-binding site is contributed by Tyr352. The Nucleophile role is filled by Glu429. Substrate contacts are provided by residues Trp477 and 484 to 485 (EF). Asn520 carries N-linked (GlcNAc...) asparagine glycosylation.

The protein belongs to the glycosyl hydrolase 1 family. As to quaternary structure, homodimer. As to expression, in vacuoles called myrosin grains of a certain class of cells, myrosin cells, distributed in the cotyledons and the axis of the embryo as well as in different organs of the growing plant.

It is found in the vacuole. The catalysed reaction is a thioglucoside + H2O = a sugar + a thiol.. Degradation of glucosinolates (glucose residue linked by a thioglucoside bound to an amino acid derivative) to glucose, sulfate and any of the products: thiocyanates, isothiocyanates, nitriles, epithionitriles or oxazolidine-2-thiones. This chain is Myrosinase, found in Brassica napus (Rape).